The chain runs to 88 residues: Protein MATERNALLY EXPRESSED GENE 1 (88 aa).

The first 27 residues, 1–27, serve as a signal peptide directing secretion; sequence MEYKKRVDALVFFSLLLLGYFAAHAHG. Residue Asn36 is glycosylated (N-linked (GlcNAc...) asparagine). Disulfide bonds link Cys65–Cys87 and Cys68–Cys76.

This sequence belongs to the MEG family. Post-translationally, glycosylated. In terms of tissue distribution, expressed exclusively in endosperm. Found in basal endosperm transfer cells.

It is found in the secreted. Its subcellular location is the cell wall. The protein resides in the cell membrane. The protein localises to the extracellular space. It localises to the extracellular matrix. Functionally, regulates maternal nutrient uptake, sucrose partitioning, and seed biomass yield. Necessary and sufficient for the establishment and differentiation of the endosperm nutrient transfer cells located at the mother:seed interface. Exclusive expression of the maternal allele at the early stages of endosperm development. The maternal allele is hypomethylated. At later stages, expression becomes biallelic. Regulated by the transcription factor MRP1. The polypeptide is Protein MATERNALLY EXPRESSED GENE 1 (MEG1) (Zea mays (Maize)).